The chain runs to 353 residues: MSEPLKPRIDFAGPLEVEQNQTLKTQQTFSETQAQTFAPAQVDEPLEDEGQAEAVIDAALRPKRSLWRKMVMGGLALFGVSVVGQGVQWTMNAWQTQDWVALGGCAAGALIIGAGVGSVATEWRRLWRLRQRAHERDEARDLLHSHGTGKGRAFCEKLAQQAGIDQSHPALQRWYASIHETQNDREVVSLYAQLVQPVLDAQARREISRSAAESTLMIAVSPLALVDMAFIAWRNLRLINRIATLYGIELGYYSRLRLFRLVLLNIAFAGASELVREVGMDWMSQDLAARLSARAAQGIGAGLLTARLGIKAMELCRPLPWIDDDKPRLGDFRRQLIVQVKETLQKSKTPREN.

A run of 3 helical transmembrane segments spans residues 70–90 (MVMG…VQWT), 99–119 (WVAL…VGSV), and 213–233 (ESTL…FIAW).

This sequence belongs to the UPF0283 family.

It localises to the cell inner membrane. This Citrobacter koseri (strain ATCC BAA-895 / CDC 4225-83 / SGSC4696) protein is UPF0283 membrane protein CKO_01392.